The following is a 337-amino-acid chain: Phosphate acyltransferase (337 aa).

Belongs to the PlsX family. As to quaternary structure, homodimer. Probably interacts with PlsY.

It localises to the cytoplasm. The enzyme catalyses a fatty acyl-[ACP] + phosphate = an acyl phosphate + holo-[ACP]. The protein operates within lipid metabolism; phospholipid metabolism. In terms of biological role, catalyzes the reversible formation of acyl-phosphate (acyl-PO(4)) from acyl-[acyl-carrier-protein] (acyl-ACP). This enzyme utilizes acyl-ACP as fatty acyl donor, but not acyl-CoA. The protein is Phosphate acyltransferase of Ehrlichia canis (strain Jake).